The sequence spans 555 residues: L-ascorbate oxidase homolog (555 aa).

A signal peptide spans 1-23; the sequence is MRGVKLLAACLYLAAAATVVVHA. Plastocyanin-like domains are found at residues 25–145 and 158–301; these read DPYF…LRVN and EDDY…RYEG. N33, N61, and N110 each carry an N-linked (GlcNAc...) asparagine glycan. A disulfide bond links C103 and C539. N330, N350, and N422 each carry an N-linked (GlcNAc...) asparagine glycan. Residues 345–524 enclose the Plastocyanin-like 3 domain; that stretch reads HYGKINITRT…LYASVLSPEK (180 aa).

The protein belongs to the multicopper oxidase family. Maximal expression in early binucleate microspores; declines considerably in mature trinucleate pollen.

The protein localises to the secreted. Probable oxidase that may be involved in pollen tube growth. This chain is L-ascorbate oxidase homolog (Bp10), found in Brassica napus (Rape).